The following is a 340-amino-acid chain: N-acetyl-gamma-glutamyl-phosphate reductase (340 aa).

The active site involves C146.

Belongs to the NAGSA dehydrogenase family. Type 1 subfamily.

The protein resides in the cytoplasm. It carries out the reaction N-acetyl-L-glutamate 5-semialdehyde + phosphate + NADP(+) = N-acetyl-L-glutamyl 5-phosphate + NADPH + H(+). Its pathway is amino-acid biosynthesis; L-arginine biosynthesis; N(2)-acetyl-L-ornithine from L-glutamate: step 3/4. Functionally, catalyzes the NADPH-dependent reduction of N-acetyl-5-glutamyl phosphate to yield N-acetyl-L-glutamate 5-semialdehyde. The protein is N-acetyl-gamma-glutamyl-phosphate reductase of Streptococcus gordonii (strain Challis / ATCC 35105 / BCRC 15272 / CH1 / DL1 / V288).